We begin with the raw amino-acid sequence, 430 residues long: UDP-N-acetylmuramoylalanine--D-glutamate ligase (430 aa).

Position 109–115 (109–115) interacts with ATP; that stretch reads GTDGKST.

Belongs to the MurCDEF family.

It localises to the cytoplasm. The enzyme catalyses UDP-N-acetyl-alpha-D-muramoyl-L-alanine + D-glutamate + ATP = UDP-N-acetyl-alpha-D-muramoyl-L-alanyl-D-glutamate + ADP + phosphate + H(+). Its pathway is cell wall biogenesis; peptidoglycan biosynthesis. In terms of biological role, cell wall formation. Catalyzes the addition of glutamate to the nucleotide precursor UDP-N-acetylmuramoyl-L-alanine (UMA). The protein is UDP-N-acetylmuramoylalanine--D-glutamate ligase of Thermotoga maritima (strain ATCC 43589 / DSM 3109 / JCM 10099 / NBRC 100826 / MSB8).